We begin with the raw amino-acid sequence, 533 residues long: MFKNRKYAIIYTFLLILRFWFSQGSSYIHPDEHLQSFQIFANKLFGWKVELPWEFTTKKPIRSVVPLNVMLLPIFLLCRCICKSNCSPYPILLFTRLYMCLISLLIDLSIWNIVPLNARWSALLLYSSSFMATTFQTHTFTNSIETIFFFLTILFLSKLNSVPLNKKISYLYTFLLAIVSVLGFFTRITFLAFVIAPYIYFSVRCFKKNVNNPKDIFLHLCIFVSVSFATVLACILEDYKFYGVFVITFWNNLKYNSQIENLSQHGLHSRLTHFFTNMPLLCGPLIFVPKLWDVRKPATWLWLLPVFILSLFPHQEPRFLLPAASIFIVNSGCLVRSYWIKFLFVMYAVVLAVFFGIMHQNGVIPAVLEVKNIIEQRNVTTMENCNLYFNPEMPTTIYFWKIYSAPTWMLARPKFSQINTSHLYNYSTKQMISKFWETYYEEVKVVNLPEENTTEFQASTLLVCPVAMLQTSSYLQNLTMLHYIPYHVDLDDTDELPLAELIMNHGIGIFTAKEICENNTITNELPTVLRSVG.

6 helical membrane passes run 8 to 28 (AIIYTFLLILRFWFSQGSSYI), 61 to 81 (IRSVVPLNVMLLPIFLLCRCI), 91 to 111 (ILLFTRLYMCLISLLIDLSIW), 144 to 164 (IETIFFFLTILFLSKLNSVPL), 175 to 195 (LLAIVSVLGFFTRITFLAFVI), and 216 to 236 (IFLHLCIFVSVSFATVLACIL). The N-linked (GlcNAc...) asparagine glycan is linked to N261. Helical transmembrane passes span 274–294 (FFTNMPLLCGPLIFVPKLWDV), 297–317 (PATWLWLLPVFILSLFPHQEP), 319–335 (FLLPAASIFIVNSGCLV), and 338–358 (YWIKFLFVMYAVVLAVFFGIM). N-linked (GlcNAc...) asparagine glycosylation is found at N378, N419, N425, N452, N477, and N518.

It belongs to the glycosyltransferase 22 family. PIGZ subfamily.

Its subcellular location is the endoplasmic reticulum membrane. The protein operates within glycolipid biosynthesis; glycosylphosphatidylinositol-anchor biosynthesis. In terms of biological role, alpha-1,2-mannosyltransferase involved in glycosylphosphatidylinositol-anchor biosynthesis. Transfers a fourth mannose to trimannosyl-GPIs during GPI precursor assembly. The presence of a fourth mannose in GPI is essential in fungi. The chain is GPI mannosyltransferase 4 (smp3) from Schizosaccharomyces pombe (strain 972 / ATCC 24843) (Fission yeast).